The chain runs to 551 residues: Adenine deaminase (551 aa).

It belongs to the metallo-dependent hydrolases superfamily. Adenine deaminase family. It depends on Mn(2+) as a cofactor.

It catalyses the reaction adenine + H2O + H(+) = hypoxanthine + NH4(+). The sequence is that of Adenine deaminase from Leuconostoc mesenteroides subsp. mesenteroides (strain ATCC 8293 / DSM 20343 / BCRC 11652 / CCM 1803 / JCM 6124 / NCDO 523 / NBRC 100496 / NCIMB 8023 / NCTC 12954 / NRRL B-1118 / 37Y).